A 221-amino-acid chain; its full sequence is Probable glutathione S-transferase (221 aa).

The GST N-terminal domain occupies 4-83; sequence EEVILLDFWP…YIEEVWKDKA (80 aa). Glutathione is bound by residues S14, K41, I55, and 67–68; that span reads ES. The GST C-terminal domain maps to 90–214; it reads DPYDRAQARF…PKVLEFVKVL (125 aa).

It belongs to the GST superfamily. HSP26 family. Root tip-specific expression.

It carries out the reaction RX + glutathione = an S-substituted glutathione + a halide anion + H(+). The polypeptide is Probable glutathione S-transferase (Nicotiana tabacum (Common tobacco)).